A 184-amino-acid chain; its full sequence is ATP synthase subunit delta (184 aa).

It belongs to the ATPase delta chain family. F-type ATPases have 2 components, F(1) - the catalytic core - and F(0) - the membrane proton channel. F(1) has five subunits: alpha(3), beta(3), gamma(1), delta(1), epsilon(1). F(0) has three main subunits: a(1), b(2) and c(10-14). The alpha and beta chains form an alternating ring which encloses part of the gamma chain. F(1) is attached to F(0) by a central stalk formed by the gamma and epsilon chains, while a peripheral stalk is formed by the delta and b chains.

It localises to the cell inner membrane. Its function is as follows. F(1)F(0) ATP synthase produces ATP from ADP in the presence of a proton or sodium gradient. F-type ATPases consist of two structural domains, F(1) containing the extramembraneous catalytic core and F(0) containing the membrane proton channel, linked together by a central stalk and a peripheral stalk. During catalysis, ATP synthesis in the catalytic domain of F(1) is coupled via a rotary mechanism of the central stalk subunits to proton translocation. Functionally, this protein is part of the stalk that links CF(0) to CF(1). It either transmits conformational changes from CF(0) to CF(1) or is implicated in proton conduction. The sequence is that of ATP synthase subunit delta from Rickettsia conorii (strain ATCC VR-613 / Malish 7).